Reading from the N-terminus, the 123-residue chain is Methylmalonyl-CoA carboxyltransferase 1.3S subunit (123 aa).

Positions 46–123 (GAGAGKAGEG…QGGQGLIKIG (78 aa)) constitute a Biotinyl-binding domain. Residue lysine 89 is modified to N6-biotinyllysine.

In terms of assembly, transcarboxylase is composed of three subunits: 1.3S, 5S, and 12S. The core of the enzyme is composed of six 12S subunits. On each side of the core there are three pairs of 5S subunits. Each 5S dimer is attached to the core by two 1.3S subunits. Thus the total number of chains is 30 (6 + 12 + 12).

It catalyses the reaction (S)-methylmalonyl-CoA + pyruvate = propanoyl-CoA + oxaloacetate. Functionally, the biotinyl 1.3S subunit serves as a carboxyl carrier between the substrate-binding sites on the 12S and 5S subunits. The sequence is that of Methylmalonyl-CoA carboxyltransferase 1.3S subunit from Propionibacterium freudenreichii subsp. shermanii.